The following is a 647-amino-acid chain: Leucine-rich repeat and WD repeat-containing protein 1 (647 aa).

4 LRR repeats span residues 22–43, 48–69, 70–91, and 92–113; these read KIRS…PKLL, QLQE…LGLS, HLRV…CQFP, and KLEE…LKVS. Positions 204 to 267 are disordered; it reads RTQVQKANSP…GSPVAGSDGS (64 aa). Phosphoserine occurs at positions 212, 243, 251, 259, and 264. WD repeat units follow at residues 282 to 335, 341 to 379, 383 to 422, 426 to 472, 484 to 526, 542 to 582, and 598 to 646; these read HSKN…LHKY, EFFS…LLHV, FCCG…LWDI, NQDY…CWDV, EVEF…LWSW, VVLA…LYDV, and APTQ…IWGR.

Belongs to the LRWD1 family. Integral component of the ORC complex. Directly interacts with CDT1, GMNN and ORC2. Interacts with ORC2 only when non-ubiquitinated; this interaction prevents LRWD1 ubiquitination and degradation. Some of these interactions are regulated in a cell-cycle dependent manner. Interaction with ORC1 occurs predominantly during G1. Association with phosphorylated ORC1 during mitosis is not efficient. Interaction with CDT1 occurs during G1 phase, as well as during mitosis with phosphorylated CDT1. Interaction with GMNN occurs from G1/S to mitosis. Interaction with ORC2 is observed throughout the cell cycle. The stoichiometry of the ORCA/ORC/CDT1/GMNN complex is 1:1:1:2. Interacts with CUL4A and DDB1; this interaction may lead to ubiquitination. In terms of processing, ubiquitinated; undergoes 'Lys-48'-linked polyubiquitination leading to proteasomal degradation. Ubiquitination occurs within the WD repeats at the end of the G1 phase. Ubiquitination may be catalyzed by the CUL4-DDB1 E3 ubiquitin-protein ligase complex and other E3 ligases. In terms of tissue distribution, testis-specific. Drastically down-regulated in testis from patients with Sertoli cell-only syndrome (SCOS).

It localises to the nucleus. Its subcellular location is the chromosome. The protein resides in the centromere. The protein localises to the telomere. It is found in the cytoplasm. It localises to the cytoskeleton. Its subcellular location is the microtubule organizing center. The protein resides in the centrosome. The protein localises to the kinetochore. Functionally, required for G1/S transition. Recruits and stabilizes the origin recognition complex (ORC) onto chromatin during G1 to establish pre-replication complex (preRC) and to heterochromatic sites in post-replicated cells. Binds a combination of DNA and histone methylation repressive marks on heterochromatin. Binds histone H3 and H4 trimethylation marks H3K9me3, H3K27me3 and H4K20me3 in a cooperative manner with DNA methylation. Required for silencing of major satellite repeats. May be important ORC2, ORC3 and ORC4 stability. The chain is Leucine-rich repeat and WD repeat-containing protein 1 (LRWD1) from Homo sapiens (Human).